We begin with the raw amino-acid sequence, 529 residues long: Cytochrome P450 monooxygenase okaD (529 aa).

A helical membrane pass occupies residues 13–35 (LPAQHLLASLALVGALLSVGYLL). Residue C435 participates in heme binding.

It belongs to the cytochrome P450 family. Requires heme as cofactor.

It is found in the membrane. It carries out the reaction okaramine C + 2 reduced [NADPH--hemoprotein reductase] + 2 O2 = okaramine A + 2 oxidized [NADPH--hemoprotein reductase] + 4 H2O + 2 H(+). Its pathway is alkaloid biosynthesis. Its function is as follows. Cytochrome P450 monooxygenase; part of the gene cluster that mediates the biosynthesis of okaramine B, a prenylated indole alkaloid that possesses an unusual octacyclic ring system, including a four-membered azetidine ring and an eight-membered azocine ring, and that exhibits insecticidal activity against silkworm larvae. Within the pathway, okaD likely catalyzes a key step in forming the eight-membered ring of okaramine A using as substrate okaramine C. The biosynthesis begins with the NRPS okaA that condenses two tryptophan molecules into cyclo(L-Trp-L-Trp). Prenylation by the prenyltransferase okaC then leads to the formation of cyclo(N8-(alpha,alpha-dimethylallyl)-L-Trp-6a-(alpha,alpha-dime-thylallyl)-L-Trp). This is followed by indole 2,3-epoxidation by the FAD-dependent monooxygenase okaB to facilitate the formation of the hexahydropyrrolo[2,3-b]indole (HPI) moiety of okaramine C. The cytochrome P450 monooxygenase okaD then likely catalyzes formation of the eight-membered ring of okaramine A. The dioxygenase okaE further forms the unusual 2-dimethyl-3-methyl-azetidine ring to yield 12-deshydroxyl okaramine E, as well as the hydroxylation of 12-deshydroxyl okaramine E to produce okaramine E. The cytochrome P450 monoxygenase okaG converts 12-deshydroxyl okaramine E into 3-desmethyl okaramine B which is further methylated by the methyltransferase okaF into okaramine B. In a shunt pathway, okaG and okaF together are also able to convert okaramine E into okaramine D. Okaramine H is produced by nonenzymatic conversion from okaramine A. The protein is Cytochrome P450 monooxygenase okaD of Penicillium ochrochloron.